We begin with the raw amino-acid sequence, 104 residues long: Small ribosomal subunit protein bS16 (104 aa).

It belongs to the bacterial ribosomal protein bS16 family.

This is Small ribosomal subunit protein bS16 from Gemmatimonas aurantiaca (strain DSM 14586 / JCM 11422 / NBRC 100505 / T-27).